Reading from the N-terminus, the 274-residue chain is 2,3,4,5-tetrahydropyridine-2,6-dicarboxylate N-succinyltransferase (274 aa).

Substrate is bound by residues Arg104 and Asp141.

It belongs to the transferase hexapeptide repeat family. In terms of assembly, homotrimer.

The protein localises to the cytoplasm. The enzyme catalyses (S)-2,3,4,5-tetrahydrodipicolinate + succinyl-CoA + H2O = (S)-2-succinylamino-6-oxoheptanedioate + CoA. Its pathway is amino-acid biosynthesis; L-lysine biosynthesis via DAP pathway; LL-2,6-diaminopimelate from (S)-tetrahydrodipicolinate (succinylase route): step 1/3. In Shewanella baltica (strain OS155 / ATCC BAA-1091), this protein is 2,3,4,5-tetrahydropyridine-2,6-dicarboxylate N-succinyltransferase.